Here is a 117-residue protein sequence, read N- to C-terminus: Large ribosomal subunit protein bL17 (117 aa).

The protein belongs to the bacterial ribosomal protein bL17 family. Part of the 50S ribosomal subunit. Contacts protein L32.

This chain is Large ribosomal subunit protein bL17, found in Coprothermobacter proteolyticus (strain ATCC 35245 / DSM 5265 / OCM 4 / BT).